The sequence spans 773 residues: Circadian clock protein PASD1 (773 aa).

The 73-residue stretch at 30–102 (YDYFNQVTLQ…IILKFPLLNS (73 aa)) folds into the PAS domain. The disordered stretch occupies residues 313–361 (SVDQEGPMDQQDPENPVAPLDQAGLMDPVDPEDSVDLGAAGASAQPLQP). Positions 365 to 412 (VAYDIISQELELMKKLKEQLEERTWLLHDAIQNQQNALELMMDHLQKQ) are necessary for transcriptional repression. Residues 365–412 (VAYDIISQELELMKKLKEQLEERTWLLHDAIQNQQNALELMMDHLQKQ) are a coiled coil. Disordered stretches follow at residues 427 to 448 (SEAV…PLPH), 506 to 569 (QRKV…QLQE), and 732 to 773 (GVEG…NKPC). Residues 475–553 (VAFNQQQLVQ…QERKKWQGQM (79 aa)) are a coiled coil. A compositionally biased stretch (basic and acidic residues) spans 506-536 (QRKVQKQKKMQEKKKLQEQKMQEKKKLQEQR).

As to quaternary structure, interacts with the CLOCK-BMAL1 heterodimer; this interaction inhibits CLOCK-BMAL1 transcriptional activation and suppress circadian timekeeping. Interacts with BMAL1. In terms of tissue distribution, testis-specific. Expressed in a broad range of cancer cells, including melanoma, lung cancer, and breast cancer (at protein level). Testis-specific. Found in histologically normal tissues from patients with uterus, lung and small intestine cancers. Widespread expression seen in solid tumors and diffuse large B-cell lymphoma (DLBCL)-derived cell lines. Isoform 2 is expressed in all DLBCL-derived cell lines, while isoform 1 is preferentially expressed in cell lines derived from non-germinal center DLBCL.

Its subcellular location is the nucleus. Functions as a suppressor of the biological clock that drives the daily circadian rhythms of cells throughout the body. Acts as a nuclear repressor of the CLOCK-BMAL1 heterodimer-mediated transcriptional activation of the core clock components. Inhibits circadian clock function in cancer cells, when overexpressed. The polypeptide is Circadian clock protein PASD1 (Homo sapiens (Human)).